A 36-amino-acid polypeptide reads, in one-letter code: Amanexitide proprotein 1 (36 aa).

Residues 1-10 constitute a propeptide that is removed on maturation; that stretch reads MSDINTARLP. The cyclopeptide (Val-Pro) cross-link spans 11-19; that stretch reads VFSLPVFFP. The propeptide occupies 20-36; it reads FVSDDIQAVLTRGESLC.

This sequence belongs to the MSDIN fungal toxin family. Post-translationally, processed by the macrocyclase-peptidase enzyme POPB to yield a toxic cyclic nonapeptide. POPB first removes 10 residues from the N-terminus. Conformational trapping of the remaining peptide forces the enzyme to release this intermediate rather than proceed to macrocyclization. The enzyme rebinds the remaining peptide in a different conformation and catalyzes macrocyclization of the N-terminal 9 residues. As to expression, expressed in basidiocarps.

Its function is as follows. Cyclic nonapeptide that belongs to the MSDIN-like toxin family responsible for a large number of food poisoning cases and deaths. This Amanita exitialis (Guangzhou destroying angel) protein is Amanexitide proprotein 1.